Reading from the N-terminus, the 345-residue chain is Endochitinase 4 (345 aa).

The first 27 residues, 1–27, serve as a signal peptide directing secretion; sequence MAPLLNTGLVILPLIVSTLLGPMPAFA. Residues asparagine 29 and asparagine 89 are each glycosylated (N-linked (GlcNAc...) asparagine). In terms of domain architecture, GH18 spans 41-345; that stretch reads KVLQGYWENW…TFGDNVKGRL (305 aa). Glutamate 163 acts as the Proton donor in catalysis. Asparagine 316 carries an N-linked (GlcNAc...) asparagine glycan.

The protein belongs to the glycosyl hydrolase 18 family. Chitinase class V subfamily.

The protein resides in the secreted. The enzyme catalyses Random endo-hydrolysis of N-acetyl-beta-D-glucosaminide (1-&gt;4)-beta-linkages in chitin and chitodextrins.. Secreted chitinase involved in the degradation of chitin, a component of the cell walls of fungi and exoskeletal elements of some animals (including worms and arthropods). Participates in the infection process and directly acts in the penetration process of the host cuticle. This Metarhizium robertsii (strain ARSEF 23 / ATCC MYA-3075) (Metarhizium anisopliae (strain ARSEF 23)) protein is Endochitinase 4 (chi4).